Here is a 462-residue protein sequence, read N- to C-terminus: Golgi-associated PDZ and coiled-coil motif-containing protein (462 aa).

A coiled-coil region spans residues 83–194 (KAQSVSQINH…EDEALRGHIA (112 aa)). In terms of domain architecture, PDZ spans 288–371 (KVLLLKEDHE…EIEFEVVYVA (84 aa)). Residues 427 to 449 (TDTHENGDLGTASETPLDDGASK) are disordered.

In terms of assembly, homooligomer. Interacts with FZD5. Interacts with FZD8. Interacts with GRID2 and BECN1. Interacts with CSPG5. Interacts with CLCN3. Interacts with STX6. Interacts with CFTR. Interacts with ASIC3. Interacts with GOLGA3. Interacts with NLGN1. Interacts with RHOQ. Interacts with MARCHF2; the interaction leads to CFTR ubiquitination and degradation. May interact with CACNG2. Interacts with CCDC62.

The protein resides in the cytoplasm. It localises to the golgi apparatus membrane. The protein localises to the golgi apparatus. It is found in the trans-Golgi network membrane. Its subcellular location is the synapse. The protein resides in the postsynaptic density. It localises to the cell projection. The protein localises to the dendrite. Functionally, plays a role in intracellular protein trafficking and degradation. May regulate CFTR chloride currents and acid-induced ASIC3 currents by modulating cell surface expression of both channels. May also regulate the intracellular trafficking of the ADR1B receptor. May play a role in autophagy. Together with MARCHF2 mediates the ubiquitination and lysosomal degradation of CFTR. Overexpression results in CFTR intracellular retention and degradation in the lysosomes. In Pongo abelii (Sumatran orangutan), this protein is Golgi-associated PDZ and coiled-coil motif-containing protein (GOPC).